Consider the following 433-residue polypeptide: 3-phosphoshikimate 1-carboxyvinyltransferase (433 aa).

Positions 23, 24, and 28 each coordinate 3-phosphoshikimate. A phosphoenolpyruvate-binding site is contributed by Lys23. Gly95 and Arg123 together coordinate phosphoenolpyruvate. Positions 167, 169, 317, and 344 each coordinate 3-phosphoshikimate. Gln169 lines the phosphoenolpyruvate pocket. Asp317 serves as the catalytic Proton acceptor. Phosphoenolpyruvate is bound by residues Arg348 and Arg390.

It belongs to the EPSP synthase family. In terms of assembly, monomer.

The protein localises to the cytoplasm. It carries out the reaction 3-phosphoshikimate + phosphoenolpyruvate = 5-O-(1-carboxyvinyl)-3-phosphoshikimate + phosphate. The protein operates within metabolic intermediate biosynthesis; chorismate biosynthesis; chorismate from D-erythrose 4-phosphate and phosphoenolpyruvate: step 6/7. Functionally, catalyzes the transfer of the enolpyruvyl moiety of phosphoenolpyruvate (PEP) to the 5-hydroxyl of shikimate-3-phosphate (S3P) to produce enolpyruvyl shikimate-3-phosphate and inorganic phosphate. The sequence is that of 3-phosphoshikimate 1-carboxyvinyltransferase from Staphylococcus epidermidis (strain ATCC 12228 / FDA PCI 1200).